A 116-amino-acid chain; its full sequence is Endocuticle structural glycoprotein SgAbd-4 (116 aa).

Gln-1 is subject to Pyrrolidone carboxylic acid. One can recognise a Chitin-binding type R&amp;R domain in the interval 20–92 (DGSYQWNYET…PQGAHFPTPP (73 aa)). O-linked (HexNAc...) threonine glycosylation is found at Thr-90 and Thr-107. O-linked (HexNAc...) serine glycosylation occurs at Ser-110. Thr-111 carries an O-linked (HexNAc...) threonine glycan. Pro-116 is modified (proline amide).

In terms of biological role, component of the abdominal endocuticle. This chain is Endocuticle structural glycoprotein SgAbd-4, found in Schistocerca gregaria (Desert locust).